We begin with the raw amino-acid sequence, 344 residues long: N-acetyl-gamma-glutamyl-phosphate reductase (344 aa).

Cys-150 is a catalytic residue.

The protein belongs to the NAGSA dehydrogenase family. Type 1 subfamily.

It is found in the cytoplasm. It catalyses the reaction N-acetyl-L-glutamate 5-semialdehyde + phosphate + NADP(+) = N-acetyl-L-glutamyl 5-phosphate + NADPH + H(+). The protein operates within amino-acid biosynthesis; L-arginine biosynthesis; N(2)-acetyl-L-ornithine from L-glutamate: step 3/4. In terms of biological role, catalyzes the NADPH-dependent reduction of N-acetyl-5-glutamyl phosphate to yield N-acetyl-L-glutamate 5-semialdehyde. The protein is N-acetyl-gamma-glutamyl-phosphate reductase of Pseudomonas entomophila (strain L48).